Here is a 211-residue protein sequence, read N- to C-terminus: Dual specificity protein phosphatase 26 (211 aa).

Residues Asn60–Gln207 form the Tyrosine-protein phosphatase domain. Cys152 acts as the Phosphocysteine intermediate in catalysis.

Belongs to the protein-tyrosine phosphatase family. Non-receptor class dual specificity subfamily. In terms of assembly, interacts with HSF4. Brain and skeletal muscle. In the brain it is expressed ubiquitously except in the hippocampus.

The protein resides in the cytoplasm. Its subcellular location is the nucleus. It localises to the golgi apparatus. The enzyme catalyses O-phospho-L-tyrosyl-[protein] + H2O = L-tyrosyl-[protein] + phosphate. It catalyses the reaction O-phospho-L-seryl-[protein] + H2O = L-seryl-[protein] + phosphate. The catalysed reaction is O-phospho-L-threonyl-[protein] + H2O = L-threonyl-[protein] + phosphate. Its function is as follows. Inactivates MAPK1 and MAPK3 which leads to dephosphorylation of heat shock factor protein 4 and a reduction in its DNA-binding activity. The sequence is that of Dual specificity protein phosphatase 26 (Dusp26) from Mus musculus (Mouse).